The chain runs to 1203 residues: Zinc finger and BTB domain-containing protein 38 (1203 aa).

The region spanning 33 to 100 is the BTB domain; sequence CDVTIIVEDT…IYSSTVVVRR (68 aa). Residue lysine 43 forms a Glycyl lysine isopeptide (Lys-Gly) (interchain with G-Cter in SUMO2) linkage. Serine 130 is subject to Phosphoserine. Residues lysine 145, lysine 148, lysine 151, and lysine 260 each participate in a glycyl lysine isopeptide (Lys-Gly) (interchain with G-Cter in SUMO2) cross-link. Residues 230–334 form a disordered region; sequence EAYRSQPLRE…PSETPGPPAA (105 aa). A compositionally biased stretch (polar residues) spans 269-280; sequence TQTQDSDSTTEN. An interaction with CBFA2T3 region spans residues 299 to 522; it reads PAPILSHSEP…RRYQCIFCLE (224 aa). Residues 313–322 are compositionally biased toward basic and acidic residues; sequence GDVHFPREDE. The C2H2-type 1 zinc-finger motif lies at 341-363; that stretch reads YNCSCCSKSFDSSTLLGAHMQLH. Residues 370–394 form a C2H2-type 2; degenerate zinc finger; that stretch reads FVCKYCNKQFTTLNRLDRHEQICMR. C2H2-type zinc fingers lie at residues 459-481, 487-509, and 515-538; these read YSCV…ANVH, YPCH…EIWH, and YQCI…KSFH. Glycyl lysine isopeptide (Lys-Gly) (interchain with G-Cter in SUMO2) cross-links involve residues lysine 549 and lysine 556. Composition is skewed to polar residues over residues 581–598, 607–628, 635–644, and 731–741; these read RNSS…NESP, LPSS…TSSP, PSWQGTPTSA, and SNHQSPSQPVA. Disordered stretches follow at residues 581–644 and 731–776; these read RNSS…PTSA and SNHQ…VPCN. Residues 747–757 show a composition bias toward basic and acidic residues; sequence KDSKPEADKAS. Glycyl lysine isopeptide (Lys-Gly) (interchain with G-Cter in SUMO2) cross-links involve residues lysine 750, lysine 755, lysine 796, lysine 806, lysine 813, lysine 834, lysine 842, and lysine 849. 2 disordered regions span residues 857 to 882 and 895 to 914; these read KPKY…SPLG and FDEV…YYNY. Positions 866-877 are enriched in basic and acidic residues; it reads TLPRESDPETRG. Glycyl lysine isopeptide (Lys-Gly) (interchain with G-Cter in SUMO2) cross-links involve residues lysine 915, lysine 971, lysine 976, lysine 984, lysine 988, lysine 998, lysine 1024, and lysine 1033. C2H2-type zinc fingers lie at residues 1017–1039, 1045–1067, 1073–1095, 1101–1123, and 1132–1154; these read YICE…MRCH, YQCK…ERIH, FICQ…ERIH, YHCQ…ERRH, and FACF…QKKH. Glycyl lysine isopeptide (Lys-Gly) (interchain with G-Cter in SUMO2) cross-links involve residues lysine 1116, lysine 1139, lysine 1142, lysine 1157, and lysine 1190. The tract at residues 1172-1203 is disordered; the sequence is NSDLLESQPCTDSEDSDQKDDIKKPLLKMSFE.

Interacts with CBFA2T3, ZBTB4 and RBBP6. Ubiquitinated by RBBP6; leading to its degradation by the proteasome. Widely expressed throughout the adult brain where it is found mainly in neurons. Also expressed in the adrenal medulla. Not detected in non-neural tissues including heart, spleen, liver and muscle. In the embryo, expressed in the developing brain and spinal cord but not in the migratory neural crest. Also expressed in the limbs, transiently in somites, and in the embryonic liver. In the embryonic neural tube, expression is restricted to late postmitotic neurons.

It is found in the nucleus. The protein localises to the chromosome. Functionally, transcriptional regulator with bimodal DNA-binding specificity. Binds with a higher affinity to methylated CpG dinucleotides in the consensus sequence 5'-CGCG-3' but can also bind to E-box elements (5'-CACGTG-3'). Can also bind specifically to a single methyl-CpG pair. Represses transcription in a methyl-CpG-dependent manner. Plays an important role in regulating DNA-replication and common fragile sites (CFS) stability in a RBBP6- and MCM10-dependent manner; represses expression of MCM10 which plays an important role in DNA-replication. Acts as a transcriptional activator. May be involved in the differentiation and/or survival of late postmitotic neurons. The chain is Zinc finger and BTB domain-containing protein 38 from Rattus norvegicus (Rat).